The chain runs to 474 residues: tRNA-2-methylthio-N(6)-dimethylallyladenosine synthase (474 aa).

An MTTase N-terminal domain is found at 3–120 (KKLHIKTWGC…LPEMINQVKG (118 aa)). [4Fe-4S] cluster contacts are provided by Cys-12, Cys-49, Cys-83, Cys-157, Cys-161, and Cys-164. One can recognise a Radical SAM core domain in the interval 143 to 375 (RAEGPTAFVS…QERINQQAMA (233 aa)). The TRAM domain occupies 378–441 (RRMLGTTQRI…PNSLRGKVIR (64 aa)).

It belongs to the methylthiotransferase family. MiaB subfamily. As to quaternary structure, monomer. It depends on [4Fe-4S] cluster as a cofactor.

The protein localises to the cytoplasm. The catalysed reaction is N(6)-dimethylallyladenosine(37) in tRNA + (sulfur carrier)-SH + AH2 + 2 S-adenosyl-L-methionine = 2-methylsulfanyl-N(6)-dimethylallyladenosine(37) in tRNA + (sulfur carrier)-H + 5'-deoxyadenosine + L-methionine + A + S-adenosyl-L-homocysteine + 2 H(+). Functionally, catalyzes the methylthiolation of N6-(dimethylallyl)adenosine (i(6)A), leading to the formation of 2-methylthio-N6-(dimethylallyl)adenosine (ms(2)i(6)A) at position 37 in tRNAs that read codons beginning with uridine. The protein is tRNA-2-methylthio-N(6)-dimethylallyladenosine synthase of Cronobacter sakazakii (strain ATCC BAA-894) (Enterobacter sakazakii).